Here is a 140-residue protein sequence, read N- to C-terminus: Putative pre-16S rRNA nuclease (140 aa).

This sequence belongs to the YqgF nuclease family.

It localises to the cytoplasm. Its function is as follows. Could be a nuclease involved in processing of the 5'-end of pre-16S rRNA. The protein is Putative pre-16S rRNA nuclease of Mycoplasma pneumoniae (strain ATCC 29342 / M129 / Subtype 1) (Mycoplasmoides pneumoniae).